We begin with the raw amino-acid sequence, 891 residues long: MLKDILRKTTQSDLYRYENIVKKINDLERVMKPLTNEELRAKTLGFRKSIEDGQSIDNILPEAFGLVREASLRILGLRHYDVQLIGGCILHDSKIAEMKTGEGKTLVAILPAYLNALSGKSVHIVTVNEYLAKRDSLSVGRVLSFLGLSVGLILADMNREERQENYKCDVIYTTNSELGFDYLRDNLVGNPSEKVQNGFEFAIIDEVDSVLIDEARTPLIISRSLETLNNIYLTAKNVAQAFEINTHYEIDKRNRNVYLNESGSKLAEKLLGVSSIYKFETGTYILNAIKAKEFYTKDKDYLVMRNQITIVDEFTGRILKGRRWGDGLHQAIEAKEGVTVGSETMTMASITYQNFFLFYKKLSGMTGTALTEAKEFKKIYNLSVDCVPINKKVNRIDKEDVVYKSLYAKWKAVLYESLSIHEQGRPLLIGTSNVKNSEIVSGLLKEYNIKHSLLNAKPENAANESEIIAQAGRKGSVTIATNMAGRGTDILLGGNPDFLTKGELRYIFRSIVLSLDDMTVPKNELINNLKYKYVISEKNRLDVEELIDKLKSAYTVPEKNRIGVEELIENIDESFQPVDKFEILIQKLYEKTKERYVRECLAEKEEVIQLGGLHIIGTEKHDSRRIDNQLRGRAGRQGDPGSSKFFLSFEDRLIEIFTTGGLKNMIKELDLEDDQPVEGKIVSLSIESAQKRIEDKNYQVRKQLFNYDNVLNLQRKVIYDERDRFLSLTDFKGLILQYLEKLVDDVVAEMERSENQEDKSRGIVLFCKKFICLPYSIDPELLSNLSKEEIKIFLNDQVKISYELKEIELESLRVGLSQSLEYAFLLQSIDQVWKEQLTRMELLKESIGWRAYGQRDPLLEYQKEAYRIFAIQTRKIRHSASHLIMCSTSFA.

Residues Gln83, 101–105 (GEGKT), and Asp489 contribute to the ATP site.

The protein belongs to the SecA family.

It is found in the plastid. It localises to the chloroplast stroma. The protein resides in the chloroplast thylakoid membrane. It catalyses the reaction ATP + H2O + cellular proteinSide 1 = ADP + phosphate + cellular proteinSide 2.. Has a central role in coupling the hydrolysis of ATP to the transfer of proteins across the thylakoid membrane. This is Protein translocase subunit SecA from Diacronema lutheri (Unicellular marine alga).